A 1024-amino-acid polypeptide reads, in one-letter code: MLKIFEKIFGSKHEKDIKKIRPLVSSINELQMTMASLSNDQLRERGVTLKQRVRKTLEPLEQEKTSLSRKLDNPDINLEEAETINTRLDTLAEEYEQATAAILEELLPETFALVKESCVRLKGHTYLVMGREMIWDMVPYDVQLIGGIVLHSGKISEMATGEGKTLVSTLPVFLNALTGRGVHVVTVNDYLAQRDKEWMSPVFAFHNLSVGVILNTMRPEERREQYACDITYGTNNEFGFDYLRDNMASTPEEMVQRNFYYAIVDEVDSVLIDEARTPLIISGPVPNADNSKFQEIKPWIEQLVRAQQQLVAKYLGEAEKLIKTKPGDPEAGLALLRVKRGQPKNTRYIKMLSQQGMAKLVQGTENEYLKDNSSRMQEVDDELYFAVDEKANTIDLTDKGRDFLSKLSHQDSDIFMLPDVGSEVAIIESDALIPVADKIQKKDEVYRLFADRSERLHNISQLLKAYSLFERDDEYVVQNGQVMIVDEFTGRILPGRRYSDGLHQAIEAKENVKIEGETQTMATITIQNFFRLYKKLAGMTGTAETEASEFYEIYKLDVVVIPTNASIVRKDMDDLVYKTRREKYNAVVLKVEELQKKGQPVLVGTTSVEVSETLSRMLRARKIVHNVLNARQNDREAEIVAEAGQKNAVTIATNMAGRGTDIKLGSGVRELGGLFILGSERHESRRIDRQLRGRAGRQGDPGESVFFVSLEDELMRLFGSDRVISVMDRLGHEEGDVIEHSMITKSIERAQKKVEEQNFSIRKRLLEYDDVLNQQREVIYSRRRNGLIKDRLTSDILDLLRDYSELVIKKHHKMLDVDAIEEQLMRELSIEFKPERNTFEREGIEATAEKLYQTALAFYRRKEAAMPEEIMQQIEKYAVLSVIDLRWREHLREIDSLREGINLRAYGQKDPLLEYKQEAFRLFIDLLHDIELETLSLAFKLFPVNPDEAREMEERQRKAAVRQEKLIAQHKAAESVYTASSDEPETNQEESPQQPAIAEKKPGRNDLCPCGSGKKYKNCHGQQP.

ATP is bound by residues Q143, 161–165 (GEGKT), and D661. A disordered region spans residues 970 to 1024 (HKAAESVYTASSDEPETNQEESPQQPAIAEKKPGRNDLCPCGSGKKYKNCHGQQP). The Zn(2+) site is built by C1008, C1010, C1019, and H1020.

This sequence belongs to the SecA family. Monomer and homodimer. Part of the essential Sec protein translocation apparatus which comprises SecA, SecYEG and auxiliary proteins SecDF. Other proteins may also be involved. Requires Zn(2+) as cofactor.

It is found in the cell inner membrane. It localises to the cytoplasm. The catalysed reaction is ATP + H2O + cellular proteinSide 1 = ADP + phosphate + cellular proteinSide 2.. Its function is as follows. Part of the Sec protein translocase complex. Interacts with the SecYEG preprotein conducting channel. Has a central role in coupling the hydrolysis of ATP to the transfer of proteins into and across the cell membrane, serving as an ATP-driven molecular motor driving the stepwise translocation of polypeptide chains across the membrane. The sequence is that of Protein translocase subunit SecA from Pelodictyon phaeoclathratiforme (strain DSM 5477 / BU-1).